The primary structure comprises 179 residues: Small ribosomal subunit protein uS5 (179 aa).

The S5 DRBM domain maps to 13 to 76 (LDERVVLINR…EAAKRNLIRV (64 aa)). The segment at 160–179 (DMTPQELNARRMRRETTEAA) is disordered.

It belongs to the universal ribosomal protein uS5 family. Part of the 30S ribosomal subunit. Contacts proteins S4 and S8.

Functionally, with S4 and S12 plays an important role in translational accuracy. In terms of biological role, located at the back of the 30S subunit body where it stabilizes the conformation of the head with respect to the body. The protein is Small ribosomal subunit protein uS5 of Chloroflexus aggregans (strain MD-66 / DSM 9485).